The chain runs to 306 residues: Palmitoyl-protein thioesterase 1 (306 aa).

The first 27 residues, 1 to 27 (MASPGCLWLLAVALLPWTCASRALQHL), serve as a signal peptide directing secretion. A lipid anchor (S-palmitoyl cysteine; by ZDHHC3 and ZDHHC7) is attached at cysteine 6. Cystine bridges form between cysteine 45/cysteine 46, cysteine 96/cysteine 128, and cysteine 152/cysteine 160. Serine 115 is a catalytic residue. Residues asparagine 197, asparagine 212, and asparagine 232 are each glycosylated (N-linked (GlcNAc...) asparagine). Catalysis depends on residues aspartate 233 and histidine 289.

Belongs to the palmitoyl-protein thioesterase family. Interacts with CLN5. Interacts with ATP5F1A and ATP5F1B. Glycosylated.

It is found in the lysosome. The protein resides in the secreted. It localises to the golgi apparatus. Its subcellular location is the endoplasmic reticulum. It catalyses the reaction S-hexadecanoyl-L-cysteinyl-[protein] + H2O = L-cysteinyl-[protein] + hexadecanoate + H(+). The enzyme catalyses hexadecanoyl-CoA + H2O = hexadecanoate + CoA + H(+). The catalysed reaction is S-hexadecanoyl-N-acetylcysteamine + H2O = N-acetylcysteamine + hexadecanoate + H(+). It carries out the reaction S-hexadecanoyl-N-acetylcysteine methyl ester + H2O = N-acetylcysteine methyl ester + hexadecanoate + H(+). Its activity is regulated as follows. Palmitoylation reduces PPT1 enzymatic activity. In terms of biological role, has thioesterase activity against fatty acid thioesters with 14 -18 carbons, including palmitoyl-CoA, S-palmitoyl-N-acetylcysteamine, and palmitoylated proteins. In contrast to PPT2, PPT1 can hydrolyze palmitoylated proteins and palmitoylcysteine. The sequence is that of Palmitoyl-protein thioesterase 1 (PPT1) from Homo sapiens (Human).